The sequence spans 87 residues: Small ribosomal subunit protein bS20 (87 aa).

A compositionally biased stretch (basic residues) spans 1 to 11 (MANHKSALKRI). The interval 1–23 (MANHKSALKRIKQTEKRTERNRH) is disordered.

Belongs to the bacterial ribosomal protein bS20 family.

Functionally, binds directly to 16S ribosomal RNA. This Geotalea uraniireducens (strain Rf4) (Geobacter uraniireducens) protein is Small ribosomal subunit protein bS20.